Consider the following 179-residue polypeptide: X-linked lymphocyte-regulated protein 5C (179 aa).

Residues 1-11 are compositionally biased toward basic and acidic residues; sequence MSNKEQKDMKK. The tract at residues 1-75 is disordered; it reads MSNKEQKDMK…MQDFKGDDGT (75 aa). Residues 42–53 are compositionally biased toward low complexity; that stretch reads GTSGMGSHSSGS. Positions 56 to 75 are enriched in basic and acidic residues; it reads QEAREPVQKKMQDFKGDDGT. A coiled-coil region spans residues 146 to 175; sequence ITQQQMKILQTAIEDHETKLKNAKDMCDTF.

Belongs to the XLR/SYCP3 family. As to expression, expressed in testis (at protein level). Also expressed in ovary. Not detected in other tissues tested.

The protein resides in the nucleus. It localises to the chromosome. The protein is X-linked lymphocyte-regulated protein 5C of Mus musculus (Mouse).